Consider the following 865-residue polypeptide: Taste receptor type 1 member 3 (865 aa).

Residues 1–24 (MPGLALLGLTALLGLTALLDHGEG) form the signal peptide. At 25–573 (ATSCLSQQLR…FLAWGEPAVL (549 aa)) the chain is on the extracellular side. N-linked (GlcNAc...) asparagine glycans are attached at residues N134 and N267. Residues 574-594 (LLLALLALALGLALAALGLFL) form a helical membrane-spanning segment. Residues 595-606 (WHSDSPLVQASG) lie on the Cytoplasmic side of the membrane. The chain crosses the membrane as a helical span at residues 607 to 627 (GPRACFGLACLGLVCLSVLLF). Residues 628–642 (PGQPGPASCLAQQPL) are Extracellular-facing. A helical transmembrane segment spans residues 643 to 663 (FHLPLTGCLSTFFLQAAEIFV). Residues 664-685 (GSELPPSWAEKMRGRLRGPWAW) lie on the Cytoplasmic side of the membrane. The helical transmembrane segment at 686–706 (LVVLLAMLAEAALCAWYLVAF) threads the bilayer. Topologically, residues 707–732 (PPEVVTDWRVLPTEALVHCHVHSWIS) are extracellular. The chain crosses the membrane as a helical span at residues 733–753 (FGLVHATNAMLAFLCFLGTFL). The Cytoplasmic segment spans residues 754–765 (VQSRPGRYNGAR). The chain crosses the membrane as a helical span at residues 766–786 (GLTFAMLAYFITWISFVPLFA). The Extracellular portion of the chain corresponds to 787–794 (NVHVAYQP). Residues 795-815 (AVQMGTILLCALGILATFHLP) traverse the membrane as a helical segment. The Cytoplasmic portion of the chain corresponds to 816–865 (KCYLLLQRPELNTPEFFLEDNARAQGSSWGQGRGESGQKQVTPDPVTSPQ). The interval 840–865 (QGSSWGQGRGESGQKQVTPDPVTSPQ) is disordered. Positions 852-865 (GQKQVTPDPVTSPQ) are enriched in polar residues.

It belongs to the G-protein coupled receptor 3 family. TAS1R subfamily. In terms of assembly, forms homodimers or a heterodimer with TAS1R1. In terms of tissue distribution, expressed in taste buds.

It is found in the cell membrane. Functionally, putative taste receptor. TAS1R1/TAS1R3 responds to the umami taste stimulus (the taste of monosodium glutamate). The polypeptide is Taste receptor type 1 member 3 (TAS1R3) (Felis catus (Cat)).